We begin with the raw amino-acid sequence, 323 residues long: Transcription factor MYB108 (323 aa).

2 HTH myb-type domains span residues 16–68 (EMDL…LNYL) and 69–123 (RPDV…QKHA). 2 consecutive DNA-binding regions (H-T-H motif) follow at residues 44-68 (WNSLSRCAGLQRTGKSCRLRWLNYL) and 96-119 (WSKIAQYLPGRTDNEIKNYWRTRV).

Interacts with BOI, but not with BRG1. In terms of processing, ubiquitinated in vitro by BOI. As to expression, expressed specifically in flowers. Restricted to anthers in maturing flowers. Strongest expression in the vascular and connective tissue where the anther attaches to the filament. Not detected in pollen.

The protein resides in the nucleus. Functionally, transcription factor contributing to the regulation of stamen maturation and male fertility in response to jasmonate signaling. Required for correct timing of anther dehiscence. Acts as a negative regulator of abscisic acid-induced cell death. Not involved in the regulation of BOI. Regulated by MYB21 and at a lower level by MYB24. Negatively regulated by the proteasome in an SCF(COI1) E3 ubiquitin-protein ligase complex-dependent manner. In Arabidopsis thaliana (Mouse-ear cress), this protein is Transcription factor MYB108 (MYB108).